A 240-amino-acid polypeptide reads, in one-letter code: MAMASVKLLAGVLRKPDAWIGLWGVLRGTPSSYKLCTSWNRYLYFSSTKLRAPNYKTLFYNIFSLRLPGLLLSPECIFPFSVRLKSNIRSTKSTKKSLQKVDEEDSDEESHHDEMSEQEEELEDDPTVVKNYKDLEKAVQSFRYDVVLKTGLDIGRNKVEDAFYKGELRLNEEKLWKKSRTVKVGDTLDLLIGEDKEAGTETVMRILLKKVFEEKTESEKYRVVLRRWKSLKLPKKRMSK.

The N-terminal 84 residues, 1–84 (MAMASVKLLA…ECIFPFSVRL (84 aa)), are a transit peptide targeting the mitochondrion. The disordered stretch occupies residues 95 to 127 (KKSLQKVDEEDSDEESHHDEMSEQEEELEDDPT). Phosphoserine is present on residues Ser106 and Ser116. Positions 116-126 (SEQEEELEDDP) are enriched in acidic residues. Residues 142 to 217 (FRYDVVLKTG…LKKVFEEKTE (76 aa)) enclose the S4 RNA-binding domain.

Monomer. Interacts with POLRMT. Interacts (via S4 domain) with MTRFR (via C-terminus). Associates with mitoribosomal S39 large subunit, peptidyl tRNA and nascent chain.

The protein localises to the mitochondrion matrix. In terms of biological role, mitochondrial RNA-binding protein involved in mitochondrial transcription regulation. Functions as a protective factor to maintain proper mitochondrial RNA level during stress. Acts at the transcription level and its protective function depends on its RNA binding ability. Part of a mitoribosome-associated quality control pathway that prevents aberrant translation by responding to interruptions during elongation. As heterodimer with MTRF, ejects the unfinished nascent chain and peptidyl transfer RNA (tRNA), respectively, from stalled ribosomes. Recruitment of mitoribosome biogenesis factors to these quality control intermediates suggests additional roles for MTRES1 and MTRF during mitoribosome rescue. The protein is Mitochondrial transcription rescue factor 1 of Homo sapiens (Human).